The primary structure comprises 64 residues: Putative isoleucine--tRNA ligase (64 aa).

Belongs to the class-I aminoacyl-tRNA synthetase family. In terms of assembly, member of a complex that includes annexin.

The catalysed reaction is tRNA(Ile) + L-isoleucine + ATP = L-isoleucyl-tRNA(Ile) + AMP + diphosphate. The sequence is that of Putative isoleucine--tRNA ligase from Physarum polycephalum (Slime mold).